The following is a 364-amino-acid chain: Histidinol-phosphate aminotransferase (364 aa).

K226 carries the N6-(pyridoxal phosphate)lysine modification.

Belongs to the class-II pyridoxal-phosphate-dependent aminotransferase family. Histidinol-phosphate aminotransferase subfamily. In terms of assembly, homodimer. It depends on pyridoxal 5'-phosphate as a cofactor.

The catalysed reaction is L-histidinol phosphate + 2-oxoglutarate = 3-(imidazol-4-yl)-2-oxopropyl phosphate + L-glutamate. The protein operates within amino-acid biosynthesis; L-histidine biosynthesis; L-histidine from 5-phospho-alpha-D-ribose 1-diphosphate: step 7/9. In Campylobacter jejuni subsp. doylei (strain ATCC BAA-1458 / RM4099 / 269.97), this protein is Histidinol-phosphate aminotransferase.